The following is a 212-amino-acid chain: Probable chemoreceptor glutamine deamidase CheD (212 aa).

It belongs to the CheD family.

The enzyme catalyses L-glutaminyl-[protein] + H2O = L-glutamyl-[protein] + NH4(+). Functionally, probably deamidates glutamine residues to glutamate on methyl-accepting chemotaxis receptors (MCPs), playing an important role in chemotaxis. This chain is Probable chemoreceptor glutamine deamidase CheD, found in Oleidesulfovibrio alaskensis (strain ATCC BAA-1058 / DSM 17464 / G20) (Desulfovibrio alaskensis).